A 361-amino-acid chain; its full sequence is Rhomboid domain-containing protein 2 (361 aa).

5 helical membrane-spanning segments follow: residues 19–39 (SATFFTALLSLLVSGPRLFLL), 63–83 (LVTYIFVYENPVSLLCGAIII), 100–120 (CFFTLIFTVFSAIIYLSFESV), 158–178 (FGVVVPSVLVPWLLLCASWLI), and 182–202 (SFLSNVSGLLIGLSYGLTYCY). Disordered regions lie at residues 265–287 (PSYPVTQMQHASGQKLASWPPGH) and 318–361 (PASA…VAMP). 2 stretches are compositionally biased toward polar residues: residues 267–276 (YPVTQMQHAS) and 318–328 (PASAGTSQGVQ).

The protein belongs to the peptidase S54 family. Might form homotrimers; these trimers are only formed in retina. As to expression, widely expressed, including in retina and brain (at protein level), as well as in kidney, testis and ovary. Expressed in all layers of the retina, including inner segments of photoreceptor cells and ganglion cells (at protein level).

It is found in the golgi apparatus. It localises to the cis-Golgi network membrane. The protein is Rhomboid domain-containing protein 2 (Rhbdd2) of Mus musculus (Mouse).